Consider the following 340-residue polypeptide: DnaJ homolog subfamily C member 22 (340 aa).

Residues 1–50 form the TM2 domain; the sequence is MGKSLLAAYGLWALGGPLGLYHIYLGRDSHALLWMLTLGGFGMGWMWDFW. 7 helical membrane-spanning segments follow: residues 5 to 25, 30 to 50, 81 to 101, 105 to 125, 135 to 155, 186 to 206, and 212 to 232; these read LLAA…HIYL, HALL…WDFW, FIGQ…GLSF, FHMV…ATVG, LIAA…MIPI, IGLV…LNTS, and VAGS…ISAL. Residues 278-340 form the J domain; the sequence is MACKVLGVNF…LMRLRKSKTL (63 aa).

It localises to the membrane. In terms of biological role, may function as a co-chaperone. This chain is DnaJ homolog subfamily C member 22 (dnajc22), found in Xenopus tropicalis (Western clawed frog).